The chain runs to 299 residues: Peroxisomal biogenesis factor 19 (299 aa).

Residues 1–63 (MAAAEGDGGV…SPGDTAKDAL (63 aa)) are disordered. Position 2 is an N-acetylalanine (Ala2). The docking to the peroxisome membrane and binding to PEX3 stretch occupies residues 2–56 (AAAEGDGGVRAEADRELEELLESALDDFDKAKPSPAPPPTTTAPDASGPQKRSPG). The tract at residues 2–91 (AAAEGDGGVR…QATAEFEKAM (90 aa)) is necessary for PEX19 function on peroxisome biogenesis. Residues 16 to 27 (RELEELLESALD) are compositionally biased toward acidic residues. Phosphoserine is present on residues Ser35, Ser54, and Ser66. At Thr236 the chain carries Phosphothreonine. Cysteine methyl ester is present on Cys296. Residue Cys296 is the site of S-farnesyl cysteine attachment. Positions 297 to 299 (LIM) are cleaved as a propeptide — removed in mature form.

It belongs to the peroxin-19 family. In terms of assembly, interacts with a broad range of peroxisomal membrane proteins, including PEX3, PEX10, PEX11A, PEX11B, PEX12, PEX13, PEX14 and PEX16, PXMP2/PMP22, PXMP4/PMP24, SLC25A17/PMP34, ABCD1/ALDP, ABCD2/ALDRP, and ABCD3/PMP70. Also interacts with the tumor suppressor CDKN2A/p19ARF.

It localises to the cytoplasm. The protein resides in the peroxisome membrane. Necessary for early peroxisomal biogenesis. Acts both as a cytosolic chaperone and as an import receptor for peroxisomal membrane proteins (PMPs). Binds and stabilizes newly synthesized PMPs in the cytoplasm by interacting with their hydrophobic membrane-spanning domains, and targets them to the peroxisome membrane by binding to the integral membrane protein PEX3. Excludes CDKN2A from the nucleus and prevents its interaction with MDM2, which results in active degradation of TP53. This chain is Peroxisomal biogenesis factor 19 (PEX19), found in Bos taurus (Bovine).